Reading from the N-terminus, the 428-residue chain is Bacteriochlorophyll synthase 44.5 kDa chain (428 aa).

A run of 12 helical transmembrane segments spans residues 3 to 23 (LGWLQIFRLGLVQLCIGAVVV), 32 to 52 (LMVVELALPAVLPGALVALHY), 73 to 93 (FFVILGMAVLALGAFLAAVAV), 115 to 135 (GFGVGASGTSLLALLASATEP), 144 to 164 (ITWLLMIFGIAVTAGTVGHFL), 172 to 192 (LLWIVAIVTLGAVVLTTLAVW), 225 to 245 (AFTFFLFLSMTAYFLQELILE), 269 to 289 (GVFFGMLTVGLALSGLKIGSL), 291 to 311 (GWVVTGCLGSSLALMAIVALG), 317 to 337 (ALVPAVIGLGFFNGIFAVAAI), 358 to 378 (LWGAAQAIAAGFGGLVGAGAA), and 393 to 413 (LVFGAQALLFIVAAMMATGVV).

The protein belongs to the PucC family.

The protein localises to the membrane. It functions in the pathway porphyrin-containing compound metabolism; bacteriochlorophyll biosynthesis (light-independent). The chain is Bacteriochlorophyll synthase 44.5 kDa chain from Rhodobacter capsulatus (strain ATCC BAA-309 / NBRC 16581 / SB1003).